A 397-amino-acid chain; its full sequence is L-asparaginase-like protein GD25160 (397 aa).

The first 22 residues, 1-22, serve as a signal peptide directing secretion; that stretch reads MLAQSCCLRLLILLLLFTSICS. Cystine bridges form between C90-C95, C189-C205, and C344-C371.

It belongs to the Ntn-hydrolase family.

The chain is L-asparaginase-like protein GD25160 from Drosophila simulans (Fruit fly).